Consider the following 286-residue polypeptide: MRQPADGWREQALAEARVHDIDAAEIDYLIEAVTGLDRLRVRLGGPQALEAHREKLAALWRRRIEEAMPLQYLLGTAHWRDLQLQVNPAVLIPRPESEALVDVAVDFCRSCAGARVVDLGTGSGAIAVAVARALPGATVWAVDASEAALVVAGANIERYGLSEQVHLLRGNWFVPLPTQPFDAVLSNPPYIPSAEIAALMPEVRLHEPLSALDGGSDGLDAVRQIIADAARHLRPGGILALEVMAGQGPTVVQLLARDSRYGCIRTVRDWAGIERIVVTYAWARGS.

S-adenosyl-L-methionine-binding positions include Gly120–Gly124, Asp143, Trp172, and Asn187. Asn187–Tyr190 contributes to the substrate binding site.

This sequence belongs to the protein N5-glutamine methyltransferase family. PrmC subfamily.

It catalyses the reaction L-glutaminyl-[peptide chain release factor] + S-adenosyl-L-methionine = N(5)-methyl-L-glutaminyl-[peptide chain release factor] + S-adenosyl-L-homocysteine + H(+). Functionally, methylates the class 1 translation termination release factors RF1/PrfA and RF2/PrfB on the glutamine residue of the universally conserved GGQ motif. In Gloeobacter violaceus (strain ATCC 29082 / PCC 7421), this protein is Release factor glutamine methyltransferase.